We begin with the raw amino-acid sequence, 354 residues long: Rhodopsin (354 aa).

Residues 1–36 are Extracellular-facing; the sequence is MNGTEGPAFYVPMSNATGVVRSPYEYPQYYLVAPWA. Residues N2 and N15 are each glycosylated (N-linked (GlcNAc...) asparagine). The chain crosses the membrane as a helical span at residues 37-61; it reads YGLLAAYMFFLIITGFPVNFLTLYV. Topologically, residues 62-73 are cytoplasmic; it reads TIEHKKLRTPLN. Residues 74-96 form a helical membrane-spanning segment; sequence YILLNLAIADLFMVFGGFTTTMY. The Extracellular portion of the chain corresponds to 97–110; the sequence is TSLHGYFVFGRLGC. Cysteines 110 and 187 form a disulfide. Residues 111 to 133 traverse the membrane as a helical segment; that stretch reads NLEGFFATLGGEMGLWSLVVLAI. Residues 134–136 carry the 'Ionic lock' involved in activated form stabilization motif; that stretch reads ERW. Topologically, residues 134 to 152 are cytoplasmic; the sequence is ERWMVVCKPVSNFRFGENH. The chain crosses the membrane as a helical span at residues 153–173; the sequence is AIMGVAFTWVMACSCAVPPLV. Topologically, residues 174–202 are extracellular; it reads GWSRYIPEGMQCSCGVDYYTRTPGVNNES. The N-linked (GlcNAc...) asparagine glycan is linked to N200. A helical membrane pass occupies residues 203 to 224; that stretch reads FVIYMFIVHFFIPLIVIFFCYG. The Cytoplasmic portion of the chain corresponds to 225–252; it reads RLVCTVKEAAAQQQESETTQRAEREVTR. Residues 253–274 form a helical membrane-spanning segment; it reads MVIIMVIAFLICWLPYAGVAWY. The Extracellular segment spans residues 275–286; that stretch reads IFTHQGSEFGPV. A helical membrane pass occupies residues 287–308; the sequence is FMTLPAFFAKTSAVYNPCIYIC. K296 carries the N6-(retinylidene)lysine modification. Residues 309–354 lie on the Cytoplasmic side of the membrane; that stretch reads MNKQFRHCMITTLCCGKNPFEEEEGASTTASKTEASSVSSSSVSPA. Residues 333–354 are disordered; that stretch reads GASTTASKTEASSVSSSSVSPA. Residues 334–354 are compositionally biased toward low complexity; sequence ASTTASKTEASSVSSSSVSPA.

This sequence belongs to the G-protein coupled receptor 1 family. Opsin subfamily. Post-translationally, phosphorylated on some or all of the serine and threonine residues present in the C-terminal region. Contains one covalently linked retinal chromophore. Retinal rod photoreceptor cells, predominantly in the outer segments (at protein level). Retinal rod photoreceptor cells.

It localises to the membrane. Its subcellular location is the cell projection. The protein resides in the cilium. It is found in the photoreceptor outer segment. Photoreceptor required for image-forming vision at low light intensity. While most salt water fish species use retinal as chromophore, most freshwater fish use 3-dehydroretinal, or a mixture of retinal and 3-dehydroretinal. Light-induced isomerization of 11-cis to all-trans retinal triggers a conformational change that activates signaling via G-proteins. Subsequent receptor phosphorylation mediates displacement of the bound G-protein alpha subunit by arrestin and terminates signaling. This chain is Rhodopsin (rho), found in Danio rerio (Zebrafish).